The chain runs to 433 residues: GTPase Der (433 aa).

EngA-type G domains are found at residues 5 to 167 (KKVL…GRVN) and 174 to 349 (IKVG…DQLE). Residues 11-18 (GRPNVGKS), 58-62 (DTGGF), 119-122 (NKVD), 180-187 (GKPNSGKS), 227-231 (DTAGI), and 292-295 (SKWD) each bind GTP. The 81-residue stretch at 349–429 (ELKTNTPDLN…PILVELREKI (81 aa)) folds into the KH-like domain.

The protein belongs to the TRAFAC class TrmE-Era-EngA-EngB-Septin-like GTPase superfamily. EngA (Der) GTPase family. Associates with the 50S ribosomal subunit.

Functionally, GTPase that plays an essential role in the late steps of ribosome biogenesis. The chain is GTPase Der from Borrelia garinii subsp. bavariensis (strain ATCC BAA-2496 / DSM 23469 / PBi) (Borreliella bavariensis).